We begin with the raw amino-acid sequence, 203 residues long: Cupin-domain-containing oxidoreductase fogC (203 aa).

Residues 105–171 (DFAPGVESPL…GNGTLPGRML (67 aa)) form a cupin-like domain region.

The protein belongs to the virC family.

Its pathway is secondary metabolite biosynthesis. In terms of biological role, cupin-domain-containing oxidoreductase; part of the gene cluster that mediates the biosynthesis of flavoglaucin and congeners (including aspergin, dihydroauroglaucin and auroglaucin), prenylated salicylaldehyde derivatives carrying a saturated or an unsaturated C-7 side chain. The PKS fogA releases the carboxylic acid (8E,10E,12E)-3,5,7-trihydroxytetradeca-8,10,12-trienoic acid as its product, as well as derivatives with one and two double bonds. FogA is indeed able to reduce the initial triketide, thus being at least partially responsible for the differently saturated heptyl side chains of flavoglaucin congeners. The oxidoreductases fogB, fogC and fogD modify the nascent polyketide in fogA-bound form and, together, fogA, fogB, fogC and fogD are necessary for the formation of the aromatic core and the cyclized PKS products are released as salicyl alcohols. In particular, fogB is responsible for oxidation of a hydroxyl group or reduction of remaining double bond(s) at the C-7 residue whereas fogD is probably involved in the reductive release of the modified PKS products. The cytochrome P450 monooxygenase fogE is then responsible for the hydroxylation at C-3 of the benzene ring. The fogE products are substrates of the prenyltransferase fogH and the prenylated benzyl alcohols are subsequently oxidized by the fogF to produce the final aryl aldehydes flavoglaucin and congeners. The short-chain dehydrogenase fogG does not seem to be involved in the biosynthesis of the prenylated salicylaldehyde derivatives. In Aspergillus ruber (strain CBS 135680), this protein is Cupin-domain-containing oxidoreductase fogC.